A 175-amino-acid chain; its full sequence is uncharacterized protein (175 aa).

A DNL-type zinc finger spans residues 71-166; sequence QPKPTYNVSF…KPPQFKIRPA (96 aa). Zn(2+) is bound by residues Cys-82, Cys-85, Cys-107, and Cys-110.

This is an uncharacterized protein from Schizosaccharomyces pombe (strain 972 / ATCC 24843) (Fission yeast).